A 500-amino-acid polypeptide reads, in one-letter code: Cytochrome P450 71B22 (500 aa).

Residues 1-21 (MSISLYFLLLLPLFLIFFKKL) form a helical membrane-spanning segment. A heme-binding site is contributed by Cys441.

It belongs to the cytochrome P450 family. Requires heme as cofactor.

It localises to the membrane. In Arabidopsis thaliana (Mouse-ear cress), this protein is Cytochrome P450 71B22 (CYP71B22).